The primary structure comprises 293 residues: Probable E3 ubiquitin-protein ligase RNF144A-B (293 aa).

The segment at 16–237 (PLLSCKLCLG…YDKGPCRNKL (222 aa)) is TRIAD supradomain. Cys-20, Cys-23, Cys-43, Cys-46, Cys-111, Cys-116, Cys-135, Cys-138, Cys-143, Cys-146, His-151, Cys-156, Cys-186, and Cys-189 together coordinate Zn(2+). The RING-type 1 zinc-finger motif lies at 20–70 (CKLCLGEFPLEQMTTISQCQCIFCSLCLKQYVELLIKEGLETAISCPDSAC). Residues 91–156 (QHYKRLQFER…RADCHTGQAC (66 aa)) form an IBR-type zinc finger. Residues 186–215 (CPKCKVYIERDEGCAQMMCKNCKHAFCWYC) form an RING-type 2; atypical zinc finger. Cys-199 is an active-site residue. Residues Cys-204, Cys-207, Cys-212, Cys-215, His-227, and Cys-233 each coordinate Zn(2+). Residues 251–271 (VVGIFAGFGLLLLVASPFLLL) form a helical membrane-spanning segment.

Belongs to the RBR family. RNF144 subfamily.

The protein resides in the membrane. The enzyme catalyses [E2 ubiquitin-conjugating enzyme]-S-ubiquitinyl-L-cysteine + [acceptor protein]-L-lysine = [E2 ubiquitin-conjugating enzyme]-L-cysteine + [acceptor protein]-N(6)-ubiquitinyl-L-lysine.. Its pathway is protein modification; protein ubiquitination. In terms of biological role, E3 ubiquitin-protein ligase which accepts ubiquitin from E2 ubiquitin-conjugating enzymes ube2l3 and ube2l6 in the form of a thioester and then directly transfers the ubiquitin to targeted substrates. This is Probable E3 ubiquitin-protein ligase RNF144A-B (rnf144ab) from Danio rerio (Zebrafish).